Consider the following 479-residue polypeptide: U2 small nuclear ribonucleoprotein auxiliary factor 35 kDa subunit-related protein 1 (479 aa).

Residues 1 to 63 (MAALEKMTFP…EDTFIEEQQL (63 aa)) are disordered. A compositionally biased stretch (basic residues) spans 20 to 37 (SHKKYRAALKKEKRKKRR). Residues 50 to 63 (QEEEEDTFIEEQQL) show a composition bias toward acidic residues. K67 is covalently cross-linked (Glycyl lysine isopeptide (Lys-Gly) (interchain with G-Cter in SUMO2)). The segment at 171–199 (EKDRANCPFYSKTGACRFGDRCSRKHNFP) adopts a C3H1-type 1 zinc-finger fold. One can recognise an RRM domain in the interval 203 to 309 (PTLLIKSMFT…RQLQCEFCPV (107 aa)). The C3H1-type 2 zinc-finger motif lies at 311–338 (RWKMAICGLFEIQQCPRGKHCNFLHVFR). A Phosphoserine modification is found at S354. A disordered region spans residues 356 to 479 (DQTGSSFGKN…DRTVQSPQSK (124 aa)). 2 stretches are compositionally biased toward basic and acidic residues: residues 365–379 (NSER…DHYY) and 388–403 (PSPD…SERK). S389 bears the Phosphoserine mark. Basic residues-rich tracts occupy residues 404-417 (KSSH…KRTS) and 442-451 (SQSRRSHRSR).

Its subcellular location is the nucleus. The protein is U2 small nuclear ribonucleoprotein auxiliary factor 35 kDa subunit-related protein 1 of Homo sapiens (Human).